Consider the following 191-residue polypeptide: MSEKKNKKEKLADEIEQEELNILDETEETVEEEAAADTLTEEQAKILELENKLDEVENRYLRMQADFENVKKRHIADRDASQKYRSQSLAQDLLPALDSFEKALATTSDQEEVKQILKGMEMVYNQILVAFEKEGIEVIPAVGEQFDPNFHQAVMQDSDENAGSNEITAELQKGYKLKDRVIRPSMVKVNQ.

The protein belongs to the GrpE family. In terms of assembly, homodimer.

The protein resides in the cytoplasm. Participates actively in the response to hyperosmotic and heat shock by preventing the aggregation of stress-denatured proteins, in association with DnaK and GrpE. It is the nucleotide exchange factor for DnaK and may function as a thermosensor. Unfolded proteins bind initially to DnaJ; upon interaction with the DnaJ-bound protein, DnaK hydrolyzes its bound ATP, resulting in the formation of a stable complex. GrpE releases ADP from DnaK; ATP binding to DnaK triggers the release of the substrate protein, thus completing the reaction cycle. Several rounds of ATP-dependent interactions between DnaJ, DnaK and GrpE are required for fully efficient folding. In Listeria monocytogenes serotype 4a (strain HCC23), this protein is Protein GrpE.